A 96-amino-acid chain; its full sequence is Putative pterin-4-alpha-carbinolamine dehydratase (96 aa).

The protein belongs to the pterin-4-alpha-carbinolamine dehydratase family.

The catalysed reaction is (4aS,6R)-4a-hydroxy-L-erythro-5,6,7,8-tetrahydrobiopterin = (6R)-L-erythro-6,7-dihydrobiopterin + H2O. The chain is Putative pterin-4-alpha-carbinolamine dehydratase from Prochlorococcus marinus (strain MIT 9215).